Here is a 400-residue protein sequence, read N- to C-terminus: Argininosuccinate synthase (400 aa).

Residues 6 to 14 and alanine 33 contribute to the ATP site; that span reads AYSGGLDTS. Tyrosine 84 and serine 89 together coordinate L-citrulline. Glycine 114 serves as a coordination point for ATP. Residues threonine 116, asparagine 120, and aspartate 121 each coordinate L-aspartate. Asparagine 120 is an L-citrulline binding site. The L-citrulline site is built by arginine 124, serine 173, serine 182, glutamate 258, and tyrosine 270.

This sequence belongs to the argininosuccinate synthase family. Type 1 subfamily. As to quaternary structure, homotetramer.

It localises to the cytoplasm. It catalyses the reaction L-citrulline + L-aspartate + ATP = 2-(N(omega)-L-arginino)succinate + AMP + diphosphate + H(+). The protein operates within amino-acid biosynthesis; L-arginine biosynthesis; L-arginine from L-ornithine and carbamoyl phosphate: step 2/3. The sequence is that of Argininosuccinate synthase from Thermus thermophilus (strain ATCC 27634 / DSM 579 / HB8).